Reading from the N-terminus, the 313-residue chain is D-alanine--D-alanine ligase (313 aa).

Positions 114–309 (KWLWKGVGLP…FSKLVLKLIS (196 aa)) constitute an ATP-grasp domain. ATP is bound at residue 142–195 (DLTFPVIVKPSHEGSSIGMRKVDTLDALQEAVDFAQQYDSEILIEQWITGREFT). Mg(2+) is bound by residues Asp263, Glu276, and Asn278.

It belongs to the D-alanine--D-alanine ligase family. Mg(2+) serves as cofactor. It depends on Mn(2+) as a cofactor.

The protein resides in the cytoplasm. The enzyme catalyses 2 D-alanine + ATP = D-alanyl-D-alanine + ADP + phosphate + H(+). It functions in the pathway cell wall biogenesis; peptidoglycan biosynthesis. Cell wall formation. In Hydrogenovibrio crunogenus (strain DSM 25203 / XCL-2) (Thiomicrospira crunogena), this protein is D-alanine--D-alanine ligase.